A 463-amino-acid chain; its full sequence is ATP-dependent protease ATPase subunit HslU (463 aa).

Residues I19, 61-66 (GVGKTE), D277, E341, and R413 contribute to the ATP site.

The protein belongs to the ClpX chaperone family. HslU subfamily. As to quaternary structure, a double ring-shaped homohexamer of HslV is capped on each side by a ring-shaped HslU homohexamer. The assembly of the HslU/HslV complex is dependent on binding of ATP.

The protein localises to the cytoplasm. Its function is as follows. ATPase subunit of a proteasome-like degradation complex; this subunit has chaperone activity. The binding of ATP and its subsequent hydrolysis by HslU are essential for unfolding of protein substrates subsequently hydrolyzed by HslV. HslU recognizes the N-terminal part of its protein substrates and unfolds these before they are guided to HslV for hydrolysis. The sequence is that of ATP-dependent protease ATPase subunit HslU from Bacillus cereus (strain B4264).